The following is a 227-amino-acid chain: ATP-dependent Clp protease proteolytic subunit 1 (227 aa).

The Nucleophile role is filled by serine 124. The active site involves histidine 149.

This sequence belongs to the peptidase S14 family. In terms of assembly, fourteen ClpP subunits assemble into 2 heptameric rings which stack back to back to give a disk-like structure with a central cavity, resembling the structure of eukaryotic proteasomes.

It is found in the cytoplasm. The catalysed reaction is Hydrolysis of proteins to small peptides in the presence of ATP and magnesium. alpha-casein is the usual test substrate. In the absence of ATP, only oligopeptides shorter than five residues are hydrolyzed (such as succinyl-Leu-Tyr-|-NHMec, and Leu-Tyr-Leu-|-Tyr-Trp, in which cleavage of the -Tyr-|-Leu- and -Tyr-|-Trp bonds also occurs).. Its function is as follows. Cleaves peptides in various proteins in a process that requires ATP hydrolysis. Has a chymotrypsin-like activity. Plays a major role in the degradation of misfolded proteins. This Rhodopirellula baltica (strain DSM 10527 / NCIMB 13988 / SH1) protein is ATP-dependent Clp protease proteolytic subunit 1.